The following is a 138-amino-acid chain: MMTMFEEVEVEAYVYPTEDIRKVKKAMLNLIPGLQFEAFDKGEYVILVGRTKDKRALQRLYELFRGQQILDTARMMLEEGYFGEEIIIKVHKQVAYVGKVNFNEDSPLGPITITIRTKEPQKLMKWLAPRTKDGVPIE.

The protein belongs to the UPF0201 family.

This Pyrococcus horikoshii (strain ATCC 700860 / DSM 12428 / JCM 9974 / NBRC 100139 / OT-3) protein is UPF0201 protein PH1010.